Reading from the N-terminus, the 259-residue chain is Thiazole synthase (259 aa).

Catalysis depends on K102, which acts as the Schiff-base intermediate with DXP. 1-deoxy-D-xylulose 5-phosphate is bound by residues G163, 189 to 190, and 211 to 212; these read AG and NT.

It belongs to the ThiG family. In terms of assembly, homotetramer. Forms heterodimers with either ThiH or ThiS.

It localises to the cytoplasm. It catalyses the reaction [ThiS sulfur-carrier protein]-C-terminal-Gly-aminoethanethioate + 2-iminoacetate + 1-deoxy-D-xylulose 5-phosphate = [ThiS sulfur-carrier protein]-C-terminal Gly-Gly + 2-[(2R,5Z)-2-carboxy-4-methylthiazol-5(2H)-ylidene]ethyl phosphate + 2 H2O + H(+). It participates in cofactor biosynthesis; thiamine diphosphate biosynthesis. In terms of biological role, catalyzes the rearrangement of 1-deoxy-D-xylulose 5-phosphate (DXP) to produce the thiazole phosphate moiety of thiamine. Sulfur is provided by the thiocarboxylate moiety of the carrier protein ThiS. In vitro, sulfur can be provided by H(2)S. The polypeptide is Thiazole synthase (Novosphingobium aromaticivorans (strain ATCC 700278 / DSM 12444 / CCUG 56034 / CIP 105152 / NBRC 16084 / F199)).